A 460-amino-acid polypeptide reads, in one-letter code: Serine incorporator 5 (460 aa).

Residues 1–36 (MCTPCCVSQLACCCGSAACSLCCGCCPKIKQSTSTR) lie on the Extracellular side of the membrane. The helical transmembrane segment at 37-57 (FMYALFFMLVTVTCVIMMSPT) threads the bilayer. The Cytoplasmic portion of the chain corresponds to 58–89 (VEMAMREHIPFYSQMCQQLNAGENCSTLVGYS). The chain crosses the membrane as a helical span at residues 90–110 (AVYKVCFGMACFFFFFAVFTI). The Extracellular segment spans residues 111–124 (RVQNSTGCRAAVHN). A glycan (N-linked (GlcNAc...) asparagine) is linked at Asn-114. Residues 125–145 (GFWFFKFVALLACCAGGFFLP) traverse the membrane as a helical segment. At 146–156 (NQDQFLEVWRY) the chain is on the cytoplasmic side. Residues 157–177 (VGAAGGFLFIIIQLMLLVQFA) traverse the membrane as a helical segment. Residues 178–197 (HRWNQNWSSGATYNKLWYAA) lie on the Extracellular side of the membrane. Asn-183 carries an N-linked (GlcNAc...) asparagine glycan. A helical membrane pass occupies residues 198-218 (LALVTLVLFSVAVGGMVFMFM). The Cytoplasmic segment spans residues 219 to 230 (YYTHPEACFLNK). A helical transmembrane segment spans residues 231 to 251 (IFLGVNGGLCFIVSLLAISPC). Residues 252–259 (IQTFQPTS) lie on the Extracellular side of the membrane. A helical membrane pass occupies residues 260 to 280 (GLLQPAVITLYVMYLTFSALA). Topologically, residues 281 to 311 (SKPIEMVEDEIKGNITVCVFPFKSGLKSDTN) are cytoplasmic. The helical transmembrane segment at 312 to 332 (IVTGVGTAILFCCILYSCLIS) threads the bilayer. Residues 333 to 391 (TTKRSSAALQVYRNDMPENERARCCFCWVDDTEDYDDEKTSGGQNVKYDERDGTVYSYC) lie on the Extracellular side of the membrane. A helical transmembrane segment spans residues 392 to 412 (FFHFVFFLGSLYVMMTVTNWF). The Cytoplasmic portion of the chain corresponds to 413-433 (HYDNAKIERLLEGSWSVFWIK). The chain crosses the membrane as a helical span at residues 434–454 (MASSWVCLFFYMWTLVVPMLF). Residues 455–460 (PQRFQA) lie on the Extracellular side of the membrane.

It belongs to the TDE1 family.

Its subcellular location is the cell membrane. It carries out the reaction a 1,2-diacyl-sn-glycero-3-phospho-L-serine(in) = a 1,2-diacyl-sn-glycero-3-phospho-L-serine(out). The enzyme catalyses a 1,2-diacyl-sn-glycero-3-phosphocholine(in) = a 1,2-diacyl-sn-glycero-3-phosphocholine(out). It catalyses the reaction a 1,2-diacyl-sn-glycero-3-phosphoethanolamine(in) = a 1,2-diacyl-sn-glycero-3-phosphoethanolamine(out). Its function is as follows. Restriction factor required to restrict infectivity of gammaretroviruses: acts by inhibiting an early step of viral infection. Impairs the penetration of the viral particle into the cytoplasm. Non-ATP-dependent, non-specific lipid transporter for phosphatidylserine, phosphatidylcholine, and phosphatidylethanolamine. Functions as a scramblase that flips lipids in both directions across the membrane. Phospholipid scrambling results in gammaretroviral surface exposure of phosphatidylserine and loss of membrane asymmetry, which leads to loss of infectivity. Enhances the incorporation of serine into phosphatidylserine and sphingolipids. In Danio rerio (Zebrafish), this protein is Serine incorporator 5 (serinc5).